A 971-amino-acid polypeptide reads, in one-letter code: Piwi-like protein 2 (971 aa).

Symmetric dimethylarginine is present on Arg45. Arg74 carries the omega-N-methylarginine; by PRMT5; alternate modification. Arg74 is subject to Symmetric dimethylarginine; by PRMT5; alternate. Arg83 carries the post-translational modification Omega-N-methylarginine; alternate. Symmetric dimethylarginine; alternate is present on residues Arg83 and Arg95. Arg95 carries the omega-N-methylarginine; by PRMT5; alternate modification. Arg100 bears the Symmetric dimethylarginine; by PRMT5; alternate mark. Arg100 is subject to Omega-N-methylarginine; alternate. The tract at residues 102–124 is disordered; sequence LSANMVRKDREEPRSSLPDPSVL. Symmetric dimethylarginine is present on residues Arg144 and Arg156. The segment at 159 to 200 is disordered; sequence SSIGRGMDKPPSAFGLTARDPPRLPQPPALSPTSLHSADPPP. Residue Arg163 is modified to Symmetric dimethylarginine; by PRMT5. In terms of domain architecture, PAZ spans 387–500; that stretch reads SVLDVMHAIY…LLPELSFMTG (114 aa). A Symmetric dimethylarginine; by PRMT5 modification is found at Arg549. Residues 666–957 form the Piwi domain; that stretch reads MVVCIIMGTR…LAFLSGQILH (292 aa). Catalysis depends on residues Asp743, Glu781, Asp813, and His946.

The protein belongs to the argonaute family. Piwi subfamily. Interacts with DDX4, MAEL, EIF3A, EIF4E, EIF4G, PRMT5 and WDR77. Associates with EIF4E- and EIF4G-containing m7G cap-binding complexes. Interacts (when methylated on arginine residues) with TDRD1 and TDRKH/TDRD2. Interacts with TDRD12. Component of the PET complex, at least composed of EXD1, PIWIL2, TDRD12 and piRNAs. Interacts with MOV10L1. Interacts with GPAT2. Interacts with Tex19.1 and, probably, Tex19.2. Interacts (via PIWI domain) with BMAL1 and CLOCK. Interacts with GSK3B. Interacts with TEX15. Mg(2+) serves as cofactor. Post-translationally, arginine methylation by PRMT5 is required for the interaction with Tudor domain-containing protein TDRD1 and subsequent localization to the meiotic nuage, also named P granule. In terms of tissue distribution, expressed in adult testis, specifically in spermatocytes and in spermatogonia. Only detected in primordial germ cells of both sexes. Widely expressed in tumors. Also present at early stages of oocyte growth. Present in the mitotic spermatogonia. Not detected in the first stages of meiosis (preleptotene and leptotene). Detected at the late zygotene stage and increases throughout pachytene, declining from this stage onward until expression stops at the early round spermatid stage (at protein level).

It is found in the cytoplasm. Its function is as follows. Endoribonuclease that plays a central role during spermatogenesis by repressing transposable elements and preventing their mobilization, which is essential for the germline integrity. Plays an essential role in meiotic differentiation of spermatocytes, germ cell differentiation and in self-renewal of spermatogonial stem cells. Its presence in oocytes suggests that it may participate in similar functions during oogenesis in females. Acts via the piRNA metabolic process, which mediates the repression of transposable elements during meiosis by forming complexes composed of piRNAs and Piwi proteins and govern the methylation and subsequent repression of transposons. During piRNA biosynthesis, plays a key role in the piRNA amplification loop, also named ping-pong amplification cycle, by acting as a 'slicer-competent' piRNA endoribonuclease that cleaves primary piRNAs, which are then loaded onto 'slicer-incompetent' PIWIL4. PIWIL2 slicing produces a pre-miRNA intermediate, which is then processed in mature piRNAs, and as well as a 16 nucleotide by-product that is degraded. Required for PIWIL4/MIWI2 nuclear localization and association with secondary piRNAs antisense. Besides their function in transposable elements repression, piRNAs are probably involved in other processes during meiosis such as translation regulation. Indirectly modulates expression of genes such as PDGFRB, SLC2A1, ITGA6, GJA7, THY1, CD9 and STRA8. Represses circadian rhythms by promoting the stability and activity of core clock components BMAL1 and CLOCK by inhibiting GSK3B-mediated phosphorylation and ubiquitination-dependent degradation of these proteins. In Mus musculus (Mouse), this protein is Piwi-like protein 2.